Consider the following 368-residue polypeptide: Isopentenyl-diphosphate delta-isomerase (368 aa).

7–8 (RK) is a binding site for substrate. FMN contacts are provided by residues Thr-65, 66-68 (GMT), Ser-96, and Asn-125. 96–98 (SQR) is a substrate binding site. Residue Gln-160 coordinates substrate. A Mg(2+)-binding site is contributed by Glu-161. FMN is bound by residues Lys-193, Ser-218, Thr-223, 275 to 277 (GIR), and 296 to 297 (AL).

The protein belongs to the IPP isomerase type 2 family. Homooctamer. Dimer of tetramers. FMN is required as a cofactor. Requires NADPH as cofactor. The cofactor is Mg(2+).

It localises to the cytoplasm. The catalysed reaction is isopentenyl diphosphate = dimethylallyl diphosphate. Functionally, involved in the biosynthesis of isoprenoids. Catalyzes the 1,3-allylic rearrangement of the homoallylic substrate isopentenyl (IPP) to its allylic isomer, dimethylallyl diphosphate (DMAPP). The sequence is that of Isopentenyl-diphosphate delta-isomerase from Saccharolobus shibatae (strain ATCC 51178 / DSM 5389 / JCM 8931 / NBRC 15437 / B12) (Sulfolobus shibatae).